The sequence spans 705 residues: Effector protein AvrPphDPsv (705 aa).

Residues 1-15 show a composition bias toward polar residues; sequence MNPLQSIQHNITTPP. Disordered regions lie at residues 1–40 and 175–205; these read MNPLQSIQHNITTPPISGGQPLDAVGPQAQKSHPKRISPS and RLETSLLSSPDHSRPPSQPKPVHLGSVRRES.

It is found in the secreted. In terms of biological role, effector protein involved in non-host recognition. The polypeptide is Effector protein AvrPphDPsv (avrPphDPsv) (Pseudomonas savastanoi (Pseudomonas syringae pv. savastanoi)).